A 302-amino-acid chain; its full sequence is GTPase Era (302 aa).

The 168-residue stretch at 8–175 (HSGFVAIIGR…LTTLKGQLPE (168 aa)) folds into the Era-type G domain. Residues 16 to 23 (GRPNVGKS) are G1. Residue 16-23 (GRPNVGKS) coordinates GTP. The interval 42-46 (QTTRN) is G2. Residues 63–66 (DTPG) are G3. GTP is bound by residues 63 to 67 (DTPGI) and 125 to 128 (NKID). The G4 stretch occupies residues 125-128 (NKID). The G5 stretch occupies residues 154–156 (ISA). Positions 206 to 283 (TRQEVPHSTA…YLELWVKVQE (78 aa)) constitute a KH type-2 domain.

It belongs to the TRAFAC class TrmE-Era-EngA-EngB-Septin-like GTPase superfamily. Era GTPase family. In terms of assembly, monomer.

The protein resides in the cytoplasm. Its subcellular location is the cell membrane. An essential GTPase that binds both GDP and GTP, with rapid nucleotide exchange. Plays a role in 16S rRNA processing and 30S ribosomal subunit biogenesis and possibly also in cell cycle regulation and energy metabolism. The protein is GTPase Era of Lactiplantibacillus plantarum (strain ATCC BAA-793 / NCIMB 8826 / WCFS1) (Lactobacillus plantarum).